The following is a 320-amino-acid chain: Transcription factor bHLH34 (320 aa).

The region spanning 162-213 (SKPGTKACREKLRREKLNDKFMDLSSVLEPGRTPKTDKSAILDDAIRVVNQL) is the bHLH domain. Residues 299–320 (WSPLPPADRDTSRDLKNLPPVA) form a disordered region. The segment covering 305 to 314 (ADRDTSRDLK) has biased composition (basic and acidic residues).

Homodimer. As to expression, expressed constitutively in roots, leaves, stems, and flowers.

The protein localises to the nucleus. This Arabidopsis thaliana (Mouse-ear cress) protein is Transcription factor bHLH34 (BHLH34).